We begin with the raw amino-acid sequence, 229 residues long: Cytidylate kinase (229 aa).

12-20 contacts ATP; sequence GPSGVGKST.

The protein belongs to the cytidylate kinase family. Type 1 subfamily.

It is found in the cytoplasm. It carries out the reaction CMP + ATP = CDP + ADP. The catalysed reaction is dCMP + ATP = dCDP + ADP. The polypeptide is Cytidylate kinase (Mesomycoplasma hyopneumoniae (strain 232) (Mycoplasma hyopneumoniae)).